Here is a 111-residue protein sequence, read N- to C-terminus: MSAAIQFIRGVDEEVIPDVRLTRAKDGSSGRAIFYFENPNLIQEGKLEVMGMYLQDEEGELTTLDVSAKFVNGKPHAIEANYDMKSEEEWDRFMRFMNRYAESHGLGFSKS.

The protein belongs to the Psb28 family. As to quaternary structure, part of the photosystem II complex.

It is found in the cellular thylakoid membrane. The polypeptide is Photosystem II reaction center Psb28 protein (Acaryochloris marina (strain MBIC 11017)).